Reading from the N-terminus, the 1167-residue chain is PH and Rap-GAP domain-containing protein DDB_G0271806 (1167 aa).

PH domains lie at 35–140 (NCVK…SSSL) and 165–257 (HVYL…SRIP). The interval 95–160 (GIDNNNCTNS…TNANTNNGLS (66 aa)) is disordered. Over residues 98 to 155 (NNNCTNSNSNNNNNNSDLIHLSAPSLSSSTSSTISPISSSSSLTTTTTTTTTTTNANT) the composition is skewed to low complexity. Disordered regions lie at residues 335 to 361 (SGGG…GGSL), 376 to 400 (WRFS…STQV), and 645 to 734 (YSRS…LEPE). Low complexity predominate over residues 340–351 (NNSSPSSLQSQQ). Residues 648-676 (SEPNLQSCLSSSPSTRETMVPSSPSSHQL) are compositionally biased toward polar residues. The span at 687 to 732 (EQQLSSSSSSSSQQLQLQLQQQEQEQLLQEQPEAEQSQPEPQPQLE) shows a compositional bias: low complexity. One can recognise a Rap-GAP domain in the interval 950–1162 (LLSFEERQTT…RTRESLLNYY (213 aa)).

The chain is PH and Rap-GAP domain-containing protein DDB_G0271806 from Dictyostelium discoideum (Social amoeba).